The chain runs to 694 residues: Nuclear factor erythroid 2-related factor 3 (694 aa).

Residues 133–150 (ASSTGGAGASVDGGSQAV) are compositionally biased toward low complexity. Disordered stretches follow at residues 133–256 (ASST…LNGT) and 330–357 (DPTA…QTLP). 2 stretches are compositionally biased toward basic and acidic residues: residues 193-217 (GVLR…RVSA) and 231-254 (NKIA…RHLN). The segment covering 333–357 (ARTSQSQEPFLQLNSHTTNPEQTLP) has biased composition (polar residues). Residues 578-641 (LIRDIRRRGK…NIMKQKLHDL (64 aa)) form the bZIP domain. Residues 580 to 599 (RDIRRRGKNKVAAQNCRKRK) are basic motif. The segment at 606–620 (LEDDVCNLQAKKETL) is leucine-zipper.

This sequence belongs to the bZIP family. CNC subfamily. In terms of assembly, heterodimer with MAFG, MAFK and other small MAF proteins that binds to the MAF recognition elements (MARE). Highly expressed in human placenta and also in B-cell and monocyte cell lines. Low expression in heart, brain, lung, skeletal muscle, kidney and pancreas.

It is found in the nucleus. Functionally, activates erythroid-specific, globin gene expression. The polypeptide is Nuclear factor erythroid 2-related factor 3 (NFE2L3) (Homo sapiens (Human)).